Here is a 577-residue protein sequence, read N- to C-terminus: Gamma-tubulin complex component gfh1 (577 aa).

The protein belongs to the TUBGCP family.

It localises to the cytoplasm. It is found in the cytoskeleton. Its subcellular location is the microtubule organizing center. The protein resides in the spindle pole body. Functionally, required for proper anchoring of astral microtubules at the spindle pole bodies (SPBs), during anaphase, ensuring correct cell polarity. In Schizosaccharomyces pombe (strain 972 / ATCC 24843) (Fission yeast), this protein is Gamma-tubulin complex component gfh1 (gfh1).